The primary structure comprises 261 residues: Na(+)-translocating NADH-quinone reductase subunit C (261 aa).

A helical membrane pass occupies residues 11–31; sequence LLVALVVCLVSSVFVAGAAVA. Thr-230 carries the post-translational modification FMN phosphoryl threonine.

Belongs to the NqrC family. As to quaternary structure, composed of six subunits; NqrA, NqrB, NqrC, NqrD, NqrE and NqrF. FMN is required as a cofactor.

It localises to the cell inner membrane. It catalyses the reaction a ubiquinone + n Na(+)(in) + NADH + H(+) = a ubiquinol + n Na(+)(out) + NAD(+). Its function is as follows. NQR complex catalyzes the reduction of ubiquinone-1 to ubiquinol by two successive reactions, coupled with the transport of Na(+) ions from the cytoplasm to the periplasm. NqrA to NqrE are probably involved in the second step, the conversion of ubisemiquinone to ubiquinol. The sequence is that of Na(+)-translocating NADH-quinone reductase subunit C from Pseudomonas aeruginosa (strain ATCC 15692 / DSM 22644 / CIP 104116 / JCM 14847 / LMG 12228 / 1C / PRS 101 / PAO1).